The following is a 1076-amino-acid chain: MIVPIVLFLTLCPSELSAWGSPGDPIVCGVRTETNKSIQIEWKEGRSEKLCQIDRLGHVTSWLRNHSSFQGLIGQVKGRPSVSYFPEGASYPRWSGLLSPCDAEWLGLIAVSKAGDTDMIVPGPTYKGKIFVERPTYNGYKGWGCADGKSLSHSGTYCETDSSVSSGLIQGDRVLWVGEVVCQRGTPVPEDVFSELVSLSQSEFPDVCKIDGVALNQCEQESIPQPLDVAWIDVGRSHKVLMREHKTKWVQESSAKDFVCFKVGQGPCSKQEEDDCMSKGNCHGDEVFCRMAGCSARMQDNQEGCRCELLQKPGEIIVNYGGVSVRPTCYGFSRMMATLEVHKPDRELTGCTGCHLECIEGGVKIVTLTSELRSATVCASHFCASAKGGSKTTDILFHTGALVGPNSIRITGQLLDGSKFSFDGHCIFPDGCMALDCTFCKEFLRNPQCYPVKKWLFLVVVIMCCYCALMLLTNILRAIGVWGTWVFAPIKLALALGLRLAKLSKKGLVAVVTRGQMIVNDELHQVRVERGEQNEGRQGYGPRGPIRHWLYSPALILILTTSICSGCDELVHAESKSITCKSASGNEKECSVTGRALLPAVNPGQEACLHFSVPGSPDSKCLKIKVKSINLRCKQASSYYVPEAKARCTSVRRCRWAGDCQSGCPTYFSSNSFSDDWANRMDRAGLGMSGCSDGCGGAACGCFNAAPSCIFWRKWVENPSNRVWKVSPCASWVLAATIELTLPSGEVKTLEPVTGQATQMFKGVAITYLGSSIEIVGMTRLCEMKEMGTGIMALAPCNDPGHAIMGNVGEIQCSSIESAKHIRSDGCIWNADLVGIELRVDDAVCFSKLTSVEAVANFSKIPATISGVRFDQGNHGESRIYGSPLDITRVSGEFSVSFRGMRLKLSEISASCTGEITNVSGCYSCMTGASVSIKLHSSKNTTGHLKCDSDETAFSVMEGTHTYRPHMSFDKAVIDEECVLNCGGHSSKLLLKGSLVFMDVPRFVDGSYVQTYHSKVPAGGRVPNPVDWLNALFGDGITRWILGIIGVLLACVMLFVVVVAITRRLIKGLTQRAKVA.

An N-terminal signal peptide occupies residues 1 to 18 (MIVPIVLFLTLCPSELSA). The Lumenal segment spans residues 19-455 (WGSPGDPIVC…NPQCYPVKKW (437 aa)). 9 disulfide bridges follow: C28-C51, C145-C158, C182-C329, C208-C218, C260-C307, C289-C294, C351-C354, C358-C426, and C378-C383. A helical membrane pass occupies residues 456 to 476 (LFLVVVIMCCYCALMLLTNIL). The segment at 477–523 (RAIGVWGTWVFAPIKLALALGLRLAKLSKKGLVAVVTRGQMIVNDEL) is golgi retention signal. Residues 477 to 539 (RAIGVWGTWV…RGEQNEGRQG (63 aa)) are Cytoplasmic-facing. Residues 544–566 (GPIRHWLYSPALILILTTSICSG) form an internal signal sequence for glycoprotein C region. Cystine bridges form between C567/C608, C580/C590, C633/C729, C648/C845, C654/C702, C660/C709, C664/C691, C695/C700, C782/C797, and C813/C827. At 567–1040 (CDELVHAESK…ALFGDGITRW (474 aa)) the chain is on the lumenal side. Residues 654-660 (CRWAGDC) are fusion loop. A fusion loop region spans residues 695 to 709 (CGGAACGCFNAAPSC). N-linked (GlcNAc...) asparagine; by host glycans are attached at residues N857 and N918. 2 cysteine pairs are disulfide-bonded: C912-C982 and C922-C925. N940 carries N-linked (GlcNAc...) asparagine; by host glycosylation. The helical transmembrane segment at 1041–1061 (ILGIIGVLLACVMLFVVVVAI) threads the bilayer. The Cytoplasmic segment spans residues 1062 to 1076 (TRRLIKGLTQRAKVA).

This sequence belongs to the phlebovirus envelope glycoprotein family. In terms of assembly, heterodimer with glycoprotein C. Heterodimer with glycoprotein N. Homotrimer (postfusion). In terms of processing, specific enzymatic cleavages in vivo yield mature proteins Glycoprotein C, and Glycoprotein N. Glycosylated. Post-translationally, palmitoylated.

The protein localises to the virion membrane. The protein resides in the host Golgi apparatus membrane. Its subcellular location is the host endoplasmic reticulum membrane. Its function is as follows. Structural component of the virion that interacts with glycoprotein C. It shields the hydrophobic fusion loops of the glycoprotein C, preventing premature fusion. The glycoprotein protrusions are arranged on an icosahedral lattice, with T=12 triangulation. They are able to attach the virion to the host cell receptor CD209/DC-SIGN and to promote fusion of membranes with the late endosome after endocytosis of the virion. Plays a role in the packaging of ribonucleoproteins during virus assembly. Structural component of the virion that interacts with glycoprotein N. Acts as a class II fusion protein that is activated upon acidification and subsequent repositioning of the glycoprotein N. The glycoprotein protrusions are arranged on an icosahedral lattice, with T=12 triangulation. They are able to attach the virion to the host cell receptor CD209/DC-SIGN and to promote fusion of membranes with the late endosome after endocytosis of the virion. This is Envelopment polyprotein (GP) from Alces americanus (American moose).